Reading from the N-terminus, the 509-residue chain is MFS transporter fsdG (509 aa).

N-linked (GlcNAc...) asparagine glycans are attached at residues asparagine 8 and asparagine 26. Helical transmembrane passes span 63–83, 103–123, 139–159, and 162–182; these read FLIHTILVSMLCLAGNLATTM, IALTVSIYLLGFALAPMVTSP, IFFLGFNLACAFSSNIGMFIA, and FLAGCAGSAPMTVGGGTIADF. Asparagine 189 carries an N-linked (GlcNAc...) asparagine glycan. A run of 4 helical transmembrane segments spans residues 195 to 215, 222 to 242, 298 to 318, and 341 to 361; these read LFALGPLLGPVIGPIVGGFVA, WTFRIMSIVIAVLSILSCIFL, LIFLPQVLILSFYTAFVFGLI, and GLSYIGIGFGMVGALFLFNFI. The N-linked (GlcNAc...) asparagine glycan is linked to asparagine 367. A run of 4 helical transmembrane segments spans residues 380 to 400, 408 to 428, 442 to 462, and 474 to 494; these read YLPLMTWFSPLLPIGFFWYGW, WVVPILGTFFVGFGSFAIIMP, AASVLAASNMMRYVFAAFLPL, and GWGNSLLGFLCVVLAPVPAIF.

This sequence belongs to the major facilitator superfamily.

The protein localises to the cell membrane. Its function is as follows. Efflux pump that might be required for efficient secretion of fusaridione A or other secondary metabolies produced by the fusaridione A gene cluster. This is MFS transporter fsdG from Fusarium heterosporum.